Reading from the N-terminus, the 985-residue chain is Thioredoxin domain-containing protein 11 (985 aa).

A compositionally biased stretch (gly residues) spans 1–11; the sequence is MSECGGRGGGS. A disordered region spans residues 1-38; that stretch reads MSECGGRGGGSSSSEDAEDEGGGGGGPAGSDCLSSSPT. Residues 29-38 show a composition bias toward low complexity; that stretch reads GSDCLSSSPT. Residues 65 to 85 form a helical membrane-spanning segment; that stretch reads LLCGAVALGCALLLALKFTCS. The 123-residue stretch at 92–214 folds into the Thioredoxin 1 domain; that stretch reads IPAKPPVSFF…IEKFVRRVMK (123 aa). Intrachain disulfides connect C469–C472 and C719–C722. The Thioredoxin 2 domain maps to 649–799; the sequence is LDPKQALMKL…LLRFILHHSD (151 aa). Residues 821 to 919 are a coiled coil; that stretch reads VLQRGHISHL…ASENLLTENT (99 aa). S828 bears the Phosphoserine mark. Residues 935–985 are disordered; that stretch reads RDGAESLAAQREVHPKQPEPSATPQLPGSSPPPANVSATLVSERNKENRTD.

This sequence belongs to the protein disulfide isomerase family. As to quaternary structure, interacts with the cytoplasmic part of DUOX1 and DUOX2. Interacts with TPO and CYBA. In terms of tissue distribution, widely expressed at low level. Expressed at higher level in thyroid and prostate.

The protein localises to the endoplasmic reticulum membrane. Its function is as follows. May act as a redox regulator involved in DUOX proteins folding. The interaction with DUOX1 and DUOX2 suggest that it belongs to a multiprotein complex constituting the thyroid H(2)O(2) generating system. It is however not sufficient to assist DUOX1 and DUOX2 in H(2)O(2) generation. The polypeptide is Thioredoxin domain-containing protein 11 (TXNDC11) (Homo sapiens (Human)).